A 317-amino-acid polypeptide reads, in one-letter code: Transaldolase (317 aa).

The Schiff-base intermediate with substrate role is filled by Lys-132.

This sequence belongs to the transaldolase family. Type 1 subfamily. Homodimer.

It is found in the cytoplasm. It catalyses the reaction D-sedoheptulose 7-phosphate + D-glyceraldehyde 3-phosphate = D-erythrose 4-phosphate + beta-D-fructose 6-phosphate. It functions in the pathway carbohydrate degradation; pentose phosphate pathway; D-glyceraldehyde 3-phosphate and beta-D-fructose 6-phosphate from D-ribose 5-phosphate and D-xylulose 5-phosphate (non-oxidative stage): step 2/3. Functionally, transaldolase is important for the balance of metabolites in the pentose-phosphate pathway. This Histophilus somni (strain 2336) (Haemophilus somnus) protein is Transaldolase.